Here is a 245-residue protein sequence, read N- to C-terminus: Probable phosphatase YpAngola_A2446 (245 aa).

Zn(2+)-binding residues include His-7, His-9, His-15, His-40, Glu-73, His-101, His-131, Asp-192, and His-194.

Belongs to the PHP family. Homotrimer. Zn(2+) is required as a cofactor.

The chain is Probable phosphatase YpAngola_A2446 from Yersinia pestis bv. Antiqua (strain Angola).